We begin with the raw amino-acid sequence, 185 residues long: dCTP deaminase (185 aa).

Residues 107-112, 131-133, Q152, Y166, and Q176 each bind dCTP; these read KSTYAR and TLE. E133 (proton donor/acceptor) is an active-site residue.

The protein belongs to the dCTP deaminase family. In terms of assembly, homotrimer.

The catalysed reaction is dCTP + H2O + H(+) = dUTP + NH4(+). The protein operates within pyrimidine metabolism; dUMP biosynthesis; dUMP from dCTP (dUTP route): step 1/2. Catalyzes the deamination of dCTP to dUTP. This Wolbachia sp. subsp. Brugia malayi (strain TRS) protein is dCTP deaminase.